The primary structure comprises 363 residues: Dioxygenase sphC (363 aa).

Positions 183, 185, and 259 each coordinate Fe cation.

The protein belongs to the PhyH family. As to quaternary structure, homodimer. It depends on Fe cation as a cofactor.

It catalyses the reaction sphingofungin B1 + 2-oxoglutarate + O2 = sphingofungin B + succinate + CO2. It functions in the pathway secondary metabolite biosynthesis. In terms of biological role, dioxygenase; part of the gene cluster that mediates the biosynthesis of sphingofungins, bioactive molecules acting as sphingolipid inhibitors via inhibiting serine palmitoyl transferase (SPT). Within the pathway, sphC catalyzes the hydrolxylation at C-4 to convert sphingofungin B1 into sphingofungin B as well as presphingofungin into sphingofungin B2. Sphingofungin biosynthesis starts with the PKS sphB that produces an C18 polyketide precursor 3-hydroxyoctadeca-4,10-dienoyl-ACP containing one delta-6 desaturation and one delta-12 desaturation. The aminoacyl transferase sphA uses the sphB product to produce 3-keto-presphingofungin by adding an aminomalonate molecule. SphF then reduces the C-3 ketone of 3-keto-presphingofungin which leads to presphingofungin. The cytochrome P450 monooxygenase sphH converts presphingofungin into sphingofungin B1 which is further converted to sphingofungin B by the dioxygenase sphC. SphC is also able to convert presphingofungin into sphingofungin B2. The acetyltransferase sphE acetylates sphingofungin B to produce sphingofungin C, but can also convert sphingofungin B1 into sphingofungin C1 and sphingofungin B2 into sphingofungin C2. Finally, sphingofungin C can be spontaneously converted into sphingofungin D. This is Dioxygenase sphC from Aspergillus fumigatus (strain CBS 144.89 / FGSC A1163 / CEA10) (Neosartorya fumigata).